The chain runs to 1076 residues: DNA-directed RNA polymerase subunit beta (1076 aa).

It belongs to the RNA polymerase beta chain family. In plastids the minimal PEP RNA polymerase catalytic core is composed of four subunits: alpha, beta, beta', and beta''. When a (nuclear-encoded) sigma factor is associated with the core the holoenzyme is formed, which can initiate transcription.

It is found in the plastid. The protein resides in the chloroplast. The enzyme catalyses RNA(n) + a ribonucleoside 5'-triphosphate = RNA(n+1) + diphosphate. In terms of biological role, DNA-dependent RNA polymerase catalyzes the transcription of DNA into RNA using the four ribonucleoside triphosphates as substrates. The sequence is that of DNA-directed RNA polymerase subunit beta from Triticum aestivum (Wheat).